We begin with the raw amino-acid sequence, 355 residues long: DNA-directed RNA polymerase subunit alpha (355 aa).

Residues 1-248 form an alpha N-terminal domain (alpha-NTD) region; the sequence is MYYNNDVSLC…EQLQPFISSD (248 aa). The interval 267–355 is alpha C-terminal domain (alpha-CTD); sequence YDPVLLRKVD…ELAKQHTDED (89 aa).

It belongs to the RNA polymerase alpha chain family. Homodimer. The RNAP catalytic core consists of 2 alpha, 1 beta, 1 beta' and 1 omega subunit. When a sigma factor is associated with the core the holoenzyme is formed, which can initiate transcription.

It catalyses the reaction RNA(n) + a ribonucleoside 5'-triphosphate = RNA(n+1) + diphosphate. Functionally, DNA-dependent RNA polymerase catalyzes the transcription of DNA into RNA using the four ribonucleoside triphosphates as substrates. This chain is DNA-directed RNA polymerase subunit alpha, found in Wolbachia pipientis wMel.